Here is a 370-residue protein sequence, read N- to C-terminus: Acyl-CoA:lysophosphatidylglycerol acyltransferase 1 (370 aa).

A helical transmembrane segment spans residues 22 to 42 (FAFMVVNNLVAIPSYICYVII). The HXXXXD motif signature appears at 101–106 (HQATGD). A helical transmembrane segment spans residues 342–362 (LWIFLIQSFAFLSGYMWYNII).

It belongs to the 1-acyl-sn-glycerol-3-phosphate acyltransferase family. As to expression, highly expressed in liver and placenta. Also expressed in peripheral blood, lung, kidney and brain. Detected at lower levels in colon. High expression is detected in brain and testis.

It is found in the endoplasmic reticulum membrane. It carries out the reaction a 2-acyl-sn-glycero-3-phosphoethanolamine + octadecanoyl-CoA = 1-octadecanoyl-2-acyl-sn-glycero-3-phosphoethanolamine + CoA. The enzyme catalyses 2-(9Z-octadecenoyl)-sn-glycero-3-phosphoethanolamine + octadecanoyl-CoA = 1-octadecanoyl-2-(9Z-octadecenoyl)-sn-glycero-3-phosphoethanolamine + CoA. It catalyses the reaction a 2-acyl-sn-glycero-3-phosphoethanolamine + hexadecanoyl-CoA = 1-hexadecanoyl-2-acyl-sn-glycero-3-phosphoethanolamine + CoA. The catalysed reaction is 2-(9Z-octadecenoyl)-sn-glycero-3-phosphoethanolamine + hexadecanoyl-CoA = 1-hexadecanoyl-2-(9Z-octadecenoyl)-sn-glycero-3-phosphoethanolamine + CoA. It carries out the reaction 1-tetradecanoyl-sn-glycero-3-phospho-(1'-sn-glycerol) + hexadecanoyl-CoA = 1-tetradecanoyl-2-hexadecanoyl-sn-glycero-3-phospho-(1'-sn-glycerol) + CoA. The enzyme catalyses 1-hexadecanoyl-sn-glycero-3-phospho-(1'-sn-glycerol) + dodecanoyl-CoA = 1-hexadecanoyl-2-dodecanoyl-sn-glycero-3-phospho-(1'-sn-glycerol) + CoA. It catalyses the reaction 1-hexadecanoyl-sn-glycero-3-phospho-(1'-sn-glycerol) + hexadecanoyl-CoA = 1,2-dihexadecanoyl-sn-glycero-3-phospho-(1'-sn-glycerol) + CoA. The catalysed reaction is 1-hexadecanoyl-sn-glycero-3-phospho-(1'-sn-glycerol) + octadecanoyl-CoA = 1-hexadecanoyl-2-octadecanoyl-sn-glycero-3-phospho-(1'-sn-glycerol) + CoA. It carries out the reaction 1-octadecanoyl-sn-glycero-3-phospho-(1'-sn-glycerol) + hexadecanoyl-CoA = 1-octadecanoyl-2-hexadecanoyl-sn-glycero-3-phospho-(1'-sn-glycerol) + CoA. The enzyme catalyses 1-(9Z-octadecenoyl)-sn-glycero-3-phospho-(1'-sn-glycerol) + dodecanoyl-CoA = 1-(9Z-octadecenoyl)-2-dodecanoyl-sn-glycero-3-phospho-(1'-sn-glycerol) + CoA. It catalyses the reaction 1-hexadecanoyl-sn-glycero-3-phospho-(1'-sn-glycerol) + (9Z)-octadecenoyl-CoA = 1-hexadecanoyl-2-(9Z-octadecenoyl)-sn-glycero-3-phospho-(1'-sn-glycerol) + CoA. The catalysed reaction is 1-(9Z-octadecenoyl)-sn-glycero-3-phospho-(1'-sn-glycerol) + hexadecanoyl-CoA = 1-(9Z-octadecenoyl)-2-hexadecanoyl-sn-glycero-3-phospho-(1'-sn-glycerol) + CoA. It carries out the reaction 1-(9Z-octadecenoyl)-sn-glycero-3-phospho-(1'-sn-glycerol) + (9Z)-octadecenoyl-CoA = 1,2-di-(9Z-octadecenoyl)-sn-glycero-3-phospho-(1'-sn-glycerol) + CoA. The enzyme catalyses a 2-acylglycerol + an acyl-CoA = a 1,2-diacylglycerol + CoA. It catalyses the reaction a 2-acylglycerol + hexadecanoyl-CoA = a 1-hexadecanoyl-2-acylglycerol + CoA. The catalysed reaction is a 1-acylglycerol + hexadecanoyl-CoA = an hexadecanoyl-acylglycerol + CoA. It carries out the reaction a 2-acyl-sn-glycero-3-phosphocholine + an acyl-CoA = a 1,2-diacyl-sn-glycero-3-phosphocholine + CoA. The enzyme catalyses 2-(9Z-octadecenoyl)-sn-glycero-3-phosphocholine + octadecanoyl-CoA = 1-octadecanoyl-2-(9Z-octadecenoyl)-sn-glycero-3-phosphocholine + CoA. It catalyses the reaction 2-(9Z,12Z-octadecadienoyl)-sn-glycero-3-phosphocholine + octadecanoyl-CoA = 1-octadecanoyl-2-(9Z,12Z)-octadecadienoyl-sn-glycero-3-phosphocholine + CoA. The catalysed reaction is 2-(5Z,8Z,11Z,14Z)-eicosatetraenoyl-sn-glycero-3-phosphocholine + octadecanoyl-CoA = 1-octadecanoyl-2-(5Z,8Z,11Z,14Z-eicosatetraenoyl)-sn-glycero-3-phosphocholine + CoA. It carries out the reaction 2-(9Z-octadecenoyl)-sn-glycero-3-phosphocholine + hexadecanoyl-CoA = 1-hexadecanoyl-2-(9Z-octadecenoyl)-sn-glycero-3-phosphocholine + CoA. The enzyme catalyses 2-(9Z-octadecenoyl)-sn-glycero-3-phospho-L-serine + hexadecanoyl-CoA = 1-hexadecanoyl-2-(9Z-octadecenoyl)-sn-glycero-3-phospho-L-serine + CoA. It catalyses the reaction 2-(4Z,7Z,10Z,13Z,16Z,19Z-docosahexaenoyl)-sn-glycero-3-phosphocholine + octadecanoyl-CoA = 1-octadecanoyl-2-(4Z,7Z,10Z,13Z,16Z,19Z-docosahexaenoyl)-sn-glycero-3-phosphocholine + CoA. The catalysed reaction is 1-(9Z-octadecenoyl)-sn-glycero-3-phospho-L-serine + octadecanoyl-CoA = 1-(9Z-octadecenoyl)-2-octadecanoyl-sn-glycero-3-phospho-L-serine + CoA. It carries out the reaction a 2-acyl-sn-glycero-3-phosphoethanolamine + a fatty acyl-CoA = a 1,2-diacyl-sn-glycero-3-phosphoethanolamine + CoA. Functionally, lysophospholipid acyltransferase involved in fatty acyl chain remodeling of glycerophospholipids in the endoplasmic reticulum membrane. Selectively catalyzes the transfer and esterification of saturated long-chain fatty acids from acyl-CoA to the sn-1 position of 1-lyso-2-acyl phosphatidylethanolamines (1-lyso-PE, LPE), with a preference for stearoyl CoA over palmitoyl CoA as acyl donor. Acts in concert with an unknown phospholipase A1 to convert palmitate phosphatidylethanolamine (PE) species into stearate ones. Provides substrates to the PE methylation pathway, controlling stearate/palmitate composition of PE and phosphatidylcholine (PC) species with an overall impact on de novo hepatic lipid synthesis, body fat content and life span. Can acylate lysophosphatidylglycerols (LPG) using various saturated fatty acyl-CoAs as acyl donors. Can also acylate monoacylglycerols with a preference for 2-monoacylglycerols over 1-monoacylglycerols. Has no activity toward lysophosphatidic acids (LPA). In Homo sapiens (Human), this protein is Acyl-CoA:lysophosphatidylglycerol acyltransferase 1.